A 347-amino-acid polypeptide reads, in one-letter code: Aspartate-semialdehyde dehydrogenase (347 aa).

NADP(+)-binding positions include 10–13 (TGMV) and 37–38 (RS). Arginine 108 is a binding site for phosphate. Cysteine 147 acts as the Acyl-thioester intermediate in catalysis. Substrate is bound at residue glutamine 174. 177-178 (SG) is an NADP(+) binding site. Residue glutamate 200 coordinates substrate. A phosphate-binding site is contributed by lysine 203. Residue arginine 233 participates in substrate binding. Histidine 240 (proton acceptor) is an active-site residue. Positions 276–299 (APEKPVVVRDEENRPQPRMDRDMD) are disordered. Basic and acidic residues predominate over residues 281 to 299 (VVVRDEENRPQPRMDRDMD). An NADP(+)-binding site is contributed by 327–328 (NT).

It belongs to the aspartate-semialdehyde dehydrogenase family. In terms of assembly, homodimer.

It carries out the reaction L-aspartate 4-semialdehyde + phosphate + NADP(+) = 4-phospho-L-aspartate + NADPH + H(+). Its pathway is amino-acid biosynthesis; L-lysine biosynthesis via DAP pathway; (S)-tetrahydrodipicolinate from L-aspartate: step 2/4. The protein operates within amino-acid biosynthesis; L-methionine biosynthesis via de novo pathway; L-homoserine from L-aspartate: step 2/3. It functions in the pathway amino-acid biosynthesis; L-threonine biosynthesis; L-threonine from L-aspartate: step 2/5. In terms of biological role, catalyzes the NADPH-dependent formation of L-aspartate-semialdehyde (L-ASA) by the reductive dephosphorylation of L-aspartyl-4-phosphate. The polypeptide is Aspartate-semialdehyde dehydrogenase (Methanothermobacter thermautotrophicus (strain ATCC 29096 / DSM 1053 / JCM 10044 / NBRC 100330 / Delta H) (Methanobacterium thermoautotrophicum)).